Consider the following 448-residue polypeptide: Carbon catabolite repressor protein 4 homolog 3 (448 aa).

A compositionally biased stretch (low complexity) spans 50–67; it reads SSTSGPSDSNPESSSNRS. Residues 50–92 form a disordered region; sequence SSTSGPSDSNPESSSNRSYSRRWQNPLPRRQHPDQIPSSQIAR. Mg(2+) is bound at residue Glu162.

This sequence belongs to the CCR4/nocturin family. In terms of assembly, component of the CCR4-NOT complex, at least composed of CRR4 and CAF1 proteins. Mg(2+) is required as a cofactor.

The protein resides in the nucleus. It localises to the cytoplasm. It carries out the reaction Exonucleolytic cleavage of poly(A) to 5'-AMP.. Its function is as follows. Acts as a catalytic component of the CCR4-NOT core complex, which in the nucleus seems to be a general transcription factor, and in the cytoplasm the major mRNA deadenylase involved in mRNA turnover. The protein is Carbon catabolite repressor protein 4 homolog 3 (CCR4-3) of Arabidopsis thaliana (Mouse-ear cress).